A 733-amino-acid polypeptide reads, in one-letter code: Two pore calcium channel protein 1 (733 aa).

Met-1 is subject to N-acetylmethionine. Residues 1–71 are Cytoplasmic-facing; the sequence is MEDPLIGRDS…RYYFIFTRLD (71 aa). A helical membrane pass occupies residues 72–92; the sequence is LIWSLNYFALLFLNFFEQPLW. Residues 93–120 are Vacuolar-facing; it reads CEKNPKPSCKDRDYYYLGELPYLTNAES. Residues 121-141 form a helical membrane-spanning segment; it reads IIYEVITLAILLVHTFFPISY. Over 142–158 the chain is Cytoplasmic; the sequence is EGSRIFWTSRLNLVKVA. A helical transmembrane segment spans residues 159 to 179; that stretch reads CVVILFVDVLVDFLYLSPLAF. A topological domain (vacuolar) is located at residue Asp-180. A helical; Voltage-sensor membrane pass occupies residues 181–199; it reads FLPFRIAPYVRVIIFILSI. Topologically, residues 200 to 218 are cytoplasmic; the sequence is RELRDTLVLLSGMLGTYLN. The helical transmembrane segment at 219–239 threads the bilayer; sequence ILALWMLFLLFASWIAFVMFE. Residues 240–245 are Vacuolar-facing; that stretch reads DTQQGL. Residues 246 to 260 constitute an intramembrane region (pore-forming); that stretch reads TVFTSYGATLYQMFI. The Vacuolar segment spans residues 261–282; that stretch reads LFTTSNNPDVWIPAYKSSRWSS. The helical transmembrane segment at 283 to 303 threads the bilayer; the sequence is VFFVLYVLIGVYFVTNLILAV. Over 304 to 428 the chain is Cytoplasmic; it reads VYDSFKEQLA…LSQQLRAFVR (125 aa). EF-hand domains are found at residues 322 to 357 and 363 to 398; these read MKRR…LTNY and ISKE…IALR. The chain crosses the membrane as a helical span at residues 429–449; the sequence is SPNFGYAISFILIINFIAVVV. At 450–465 the chain is on the vacuolar side; that stretch reads ETTLDIEESSAQKPWQ. A helical transmembrane segment spans residues 466–486; the sequence is VAEFVFGWIYVLEMALKIYTY. The Cytoplasmic segment spans residues 487 to 498; it reads GFENYWREGANR. The helical transmembrane segment at 499–519 threads the bilayer; the sequence is FDFLVTWVIVIGETATFITPD. The Vacuolar segment spans residues 520-528; that stretch reads ENTFFSNGE. A helical; Voltage-sensor membrane pass occupies residues 529–546; the sequence is WIRYLLLARMLRLIRLLM. Topologically, residues 547-557 are cytoplasmic; it reads NVQRYRAFIAT. Residues 558-578 traverse the membrane as a helical segment; sequence FITLIPSLMPYLGTIFCVLCI. At 579 to 615 the chain is on the vacuolar side; it reads YCSIGVQVFGGLVNAGNKKLFETELAEDDYLLFNFND. Residues 616-630 constitute an intramembrane region (pore-forming); the sequence is YPNGMVTLFNLLVMG. Residues 631 to 651 lie on the Vacuolar side of the membrane; it reads NWQVWMESYKDLTGTWWSITY. A helical transmembrane segment spans residues 652 to 672; that stretch reads FVSFYVITILLLLNLVVAFVL. The Cytoplasmic segment spans residues 673 to 733; the sequence is EAFFTELDLE…SKPECSTSDT (61 aa). Residues 686–695 are compositionally biased toward basic and acidic residues; the sequence is KCQGQDSQEK. Residues 686 to 711 form a disordered region; it reads KCQGQDSQEKRNRRRSAGSKSRSQRV.

It belongs to the calcium channel alpha-1 subunit (TC 1.A.1.11) family. Two pore calcium channel subfamily. Homodimer. Ubiquitously expressed.

It is found in the vacuole membrane. Its activity is regulated as follows. Inhibited by Al(3+). In terms of biological role, functions as a voltage-gated inward-rectifying Ca(2+) channel (VDCC) across the vacuole membrane. Is one of the essential components of the slow vacuolar (SV) channel. Acts as the major ROS-responsive Ca(2+) channel and is the possible target of Al-dependent inhibition. Involved in the regulation of germination and stomatal movement. In Arabidopsis thaliana (Mouse-ear cress), this protein is Two pore calcium channel protein 1 (TPC1).